A 160-amino-acid polypeptide reads, in one-letter code: Major strawberry allergen Fra a 1-E (160 aa).

This sequence belongs to the BetVI family. In terms of assembly, monomer. Interacts with AP. In terms of tissue distribution, highly expressed in roots. Expressed in open flowers. Expressed at low levels in leaves, flower buds and fruits.

In terms of biological role, involved in the control of flavonoid biosynthesis in fruits, probably by binding directly to natural flavonoids. Binds the natural flavonoid quercetin-3-O-glucuronide with affinities in the low micromolar range. This chain is Major strawberry allergen Fra a 1-E, found in Fragaria ananassa (Strawberry).